The following is a 73-amino-acid chain: Accessory secretory protein Asp5 (73 aa).

Residues 1–30 (MQKLLLILTILLALILITLVISLPRENQQF) form the signal peptide. Residues 52-72 (IILLIVSILLFLTLIFYMIQT) traverse the membrane as a helical segment.

As to quaternary structure, part of the accessory SecA2/SecY2 protein translocation apparatus required to export cell wall protein GspB.

It localises to the cell membrane. Functionally, part of the accessory SecA2/SecY2 system specifically required to export GspB, a serine-rich repeat cell wall protein encoded upstream in the same operon. This is Accessory secretory protein Asp5 (asp5) from Streptococcus gordonii.